Here is a 469-residue protein sequence, read N- to C-terminus: Protein YfjI (469 aa).

This Escherichia coli (strain K12) protein is Protein YfjI (yfjI).